The chain runs to 454 residues: OTU domain-containing protein 1 (454 aa).

2 disordered regions span residues 36 to 64 and 116 to 257; these read QSAS…REAA and LPPP…SRAD. The segment covering 52–64 has biased composition (low complexity); sequence RPPAAATEPREAA. The span at 116 to 125 shows a compositional bias: pro residues; that stretch reads LPPPSAPSPP. Basic and acidic residues-rich tracts occupy residues 151 to 164, 193 to 210, and 219 to 229; these read DAPD…EHRQ, GEER…RASG, and ALRRQDPEAEA. The OTU domain occupies 282–411; that stretch reads KYRFHIIPDG…NGHYDAVFDH (130 aa). The tract at residues 287-293 is cys-loop; it reads IIPDGNC. Asp-290 is an active-site residue. The Nucleophile role is filled by Cys-293. The interval 342–352 is his-loop; the sequence is AAQDGAWAGYP. A variable-loop region spans residues 399–404; sequence WLSNGH. His-404 is an active-site residue. The UIM domain occupies 430–449; the sequence is KRDEELAKSMAISLSKMYIE.

The catalysed reaction is Thiol-dependent hydrolysis of ester, thioester, amide, peptide and isopeptide bonds formed by the C-terminal Gly of ubiquitin (a 76-residue protein attached to proteins as an intracellular targeting signal).. In terms of biological role, deubiquitinating enzyme that specifically hydrolyzes 'Lys-63'-linked polyubiquitin to monoubiquitin. Required for the stability and translation of a subset mRNAs with a high abundance of rare codons by mediating deubiquitination of 40S ribosomal protein RPS10/eS10, thereby antagonizing ZNF598-mediated 40S ubiquitination. The abundance of rare codons in mRNAs can limit the translation rate and can lead to ribosome collisions that trigger activation of ribosome quality control (RQC) pathway by ZNF598. OTUD1-mediated deubiquitination prevents activation of the RQC and subsequent dissociation of ribosomes and stimulates formation of polysomes and translation. The polypeptide is OTU domain-containing protein 1 (Otud1) (Mus musculus (Mouse)).